Here is a 610-residue protein sequence, read N- to C-terminus: Cytosolic 5'-nucleotidase 1B (610 aa).

2 disordered regions span residues 1-34 (MSQT…DKTG) and 101-277 (GSQE…DEDD). A compositionally biased stretch (basic and acidic residues) spans 9-34 (KKNEPGMRSSKESLEAEKRKESDKTG). The span at 119–132 (SQWSRISRSPSTKA) shows a compositional bias: polar residues. Over residues 148–166 (PSSSTSSRTPSTSPSLHDS) the composition is skewed to low complexity. The span at 167 to 183 (SPPPLSGQPSLQPPASP) shows a compositional bias: pro residues. Residues 236–265 (SRTSPTEWKSSSQRRGIYPASTQLDRNSLS) show a composition bias toward polar residues. Catalysis depends on Asp-467, which acts as the Nucleophile.

This sequence belongs to the 5'-nucleotidase type 3 family. The cofactor is Mg(2+). As to expression, highly expressed in testis, placenta and pancreas. Detected at lower levels in heart, kidney, liver and lung.

The protein resides in the cytoplasm. It catalyses the reaction a ribonucleoside 5'-phosphate + H2O = a ribonucleoside + phosphate. The enzyme catalyses AMP + H2O = adenosine + phosphate. With respect to regulation, activated by ADP. Its function is as follows. Catalyzes the hydrolysis of nucleotide monophosphates, releasing inorganic phosphate and the corresponding nucleoside, AMP is the major substrate. This chain is Cytosolic 5'-nucleotidase 1B (NT5C1B), found in Homo sapiens (Human).